A 326-amino-acid polypeptide reads, in one-letter code: Ig gamma-1 chain C region (326 aa).

Positions 1 to 97 are CH1; the sequence is AETTAPSVYP…ASSTKVDKKI (97 aa). A disulfide bridge links Cys-27 with Cys-82. The hinge stretch occupies residues 98-112; sequence VPRNCGGDCKPCICT. The CH2 stretch occupies residues 113-219; it reads GSEVSSVFIF…PIEKTISKPE (107 aa). Cystine bridges form between Cys-140–Cys-200 and Cys-246–Cys-304. N-linked (GlcNAc...) asparagine glycosylation is present at Asn-176. Residues 220 to 326 form a CH3 region; sequence GRTQVPHVYT…EKSLSHSPGK (107 aa).

The chain is Ig gamma-1 chain C region from Rattus norvegicus (Rat).